The chain runs to 143 residues: Peptide methionine sulfoxide reductase MsrB (143 aa).

The region spanning 16–139 (DAELRRRLTP…NSAALNFEAK (124 aa)) is the MsrB domain. Residues cysteine 55, cysteine 58, cysteine 104, and cysteine 107 each coordinate Zn(2+). Cysteine 128 acts as the Nucleophile in catalysis.

The protein belongs to the MsrB Met sulfoxide reductase family. It depends on Zn(2+) as a cofactor.

It carries out the reaction L-methionyl-[protein] + [thioredoxin]-disulfide + H2O = L-methionyl-(R)-S-oxide-[protein] + [thioredoxin]-dithiol. The protein is Peptide methionine sulfoxide reductase MsrB of Burkholderia pseudomallei (strain 1710b).